We begin with the raw amino-acid sequence, 287 residues long: Protease HtpX (287 aa).

2 consecutive transmembrane segments (helical) span residues 4-24 and 36-56; these read IMLF…VLNI and LSGL…ISLM. Residue histidine 143 coordinates Zn(2+). Residue glutamate 144 is part of the active site. Histidine 147 is a binding site for Zn(2+). Helical transmembrane passes span 158 to 178 and 192 to 212; these read LMQG…ANIV and MVYF…ASFI. Glutamate 221 serves as a coordination point for Zn(2+).

This sequence belongs to the peptidase M48B family. Zn(2+) is required as a cofactor.

The protein resides in the cell inner membrane. This Vibrio parahaemolyticus serotype O3:K6 (strain RIMD 2210633) protein is Protease HtpX.